A 343-amino-acid polypeptide reads, in one-letter code: Insertion element IS630 uncharacterized 39 kDa protein (343 aa).

This Shigella sonnei protein is Insertion element IS630 uncharacterized 39 kDa protein.